Consider the following 322-residue polypeptide: Cytochrome c biogenesis protein CcsA (322 aa).

8 helical membrane passes run 19 to 39 (NAIF…LIIV), 43 to 63 (LICN…FFYL), 72 to 92 (FFPL…LLFI), 104 to 124 (VIGA…SLSL), 150 to 170 (MMLS…YLVL), 230 to 250 (TIGI…VWAN), 264 to 281 (TWAL…HARL), and 291 to 311 (AFLG…VNFL).

Belongs to the CcmF/CycK/Ccl1/NrfE/CcsA family. May interact with Ccs1.

The protein localises to the plastid. It is found in the chloroplast thylakoid membrane. In terms of biological role, required during biogenesis of c-type cytochromes (cytochrome c6 and cytochrome f) at the step of heme attachment. This chain is Cytochrome c biogenesis protein CcsA, found in Heterosigma akashiwo (strain NIES-293 / 8280G21-1).